We begin with the raw amino-acid sequence, 60 residues long: Large ribosomal subunit protein bL33 (60 aa).

It belongs to the bacterial ribosomal protein bL33 family.

In Chlorobaculum tepidum (strain ATCC 49652 / DSM 12025 / NBRC 103806 / TLS) (Chlorobium tepidum), this protein is Large ribosomal subunit protein bL33.